Here is a 125-residue protein sequence, read N- to C-terminus: DNA-directed RNA polymerase subunit omega (125 aa).

This sequence belongs to the RNA polymerase subunit omega family. As to quaternary structure, the RNAP catalytic core consists of 2 alpha, 1 beta, 1 beta' and 1 omega subunit. When a sigma factor is associated with the core the holoenzyme is formed, which can initiate transcription.

The enzyme catalyses RNA(n) + a ribonucleoside 5'-triphosphate = RNA(n+1) + diphosphate. Its function is as follows. Promotes RNA polymerase assembly. Latches the N- and C-terminal regions of the beta' subunit thereby facilitating its interaction with the beta and alpha subunits. This is DNA-directed RNA polymerase subunit omega from Zymomonas mobilis subsp. mobilis (strain ATCC 31821 / ZM4 / CP4).